Here is an 89-residue protein sequence, read N- to C-terminus: Inner kinetochore subunit mhf2 (89 aa).

It belongs to the CENP-X/MHF2 family. In terms of assembly, the MHF histone-fold complex is a heterotetramer of 2 mhf1-mhf2 heterodimers. Component of the inner kinetochore constitutive centromere-associated network (CCAN) (also known as central kinetochore Sim4 complex in fission yeast), which is composed of at least cnl2, cnp3, cnp20, fta1, fta2, fta3, fta4, fta6, fta7, mal2, mhf1, mhf2, mis6, mis15, mis17, sim4 and wip1.

It is found in the nucleus. The protein localises to the cytoplasm. Its function is as follows. Component of a FANCM-MHF complex that promotes gene conversion at blocked replication forks, probably by reversal of the stalled fork. FANCM-MHF promotes non-crossover recombination. The chain is Inner kinetochore subunit mhf2 from Schizosaccharomyces pombe (strain 972 / ATCC 24843) (Fission yeast).